The sequence spans 36 residues: Fructose-1,6-/sedoheptulose-1,7-bisphosphate aldolase (36 aa).

The protein is Fructose-1,6-/sedoheptulose-1,7-bisphosphate aldolase (cbbA) of Nitrobacter vulgaris.